We begin with the raw amino-acid sequence, 413 residues long: Serine hydroxymethyltransferase (413 aa).

Residues L117 and 121 to 123 contribute to the (6S)-5,6,7,8-tetrahydrofolate site; that span reads GHL. K226 bears the N6-(pyridoxal phosphate)lysine mark. Residues E239 and 349-351 each bind (6S)-5,6,7,8-tetrahydrofolate; that span reads SPF.

Belongs to the SHMT family. As to quaternary structure, homodimer. Pyridoxal 5'-phosphate is required as a cofactor.

The protein localises to the cytoplasm. It carries out the reaction (6R)-5,10-methylene-5,6,7,8-tetrahydrofolate + glycine + H2O = (6S)-5,6,7,8-tetrahydrofolate + L-serine. Its pathway is one-carbon metabolism; tetrahydrofolate interconversion. It participates in amino-acid biosynthesis; glycine biosynthesis; glycine from L-serine: step 1/1. Its function is as follows. Catalyzes the reversible interconversion of serine and glycine with tetrahydrofolate (THF) serving as the one-carbon carrier. This reaction serves as the major source of one-carbon groups required for the biosynthesis of purines, thymidylate, methionine, and other important biomolecules. Also exhibits THF-independent aldolase activity toward beta-hydroxyamino acids, producing glycine and aldehydes, via a retro-aldol mechanism. The chain is Serine hydroxymethyltransferase from Bacillus cereus (strain G9842).